The primary structure comprises 99 residues: U1-theraphotoxin-Tal1a (99 aa).

Residues 1–22 form the signal peptide; it reads MNTIQVIIFAVVLVLTVTVGQA. Positions 23–57 are excised as a propeptide; that stretch reads DEDSAETSLLRKLKEAEASLFGQHLEESQHSREKR. Disulfide bonds link C58–C73, C65–C78, and C72–C93. Serine amide is present on S98.

The protein belongs to the neurotoxin 14 (magi-1) family. 08 (Ltx-4) subfamily. As to expression, expressed by the venom gland.

It localises to the secreted. Insecticidal toxin that shows strong lethal effects on American cockroaches (P.americana) and common mealbeetle (T.molitor). Possibly acts by blocking ion channel currents. Also shows significant analgesic effects in mice models of pain including abdominal writhing induced by acetic acid and formalin-induced paw licking tests. In addition, exerts marked inhibition of proliferation of some human tumor cell lines including C8166, Molt-4, A-549, BIU-87, T24, and Calu-6. This Tliltocatl albopilosus (Curlyhair tarantula) protein is U1-theraphotoxin-Tal1a.